Reading from the N-terminus, the 472-residue chain is PEP-dependent dihydroxyacetone kinase, phosphoryl donor subunit DhaM (472 aa).

The region spanning 1-135 is the PTS EIIA type-4 domain; sequence MVNLVIVSHS…HALEAKREQL (135 aa). His-9 serves as the catalytic Tele-phosphohistidine intermediate. The region spanning 155-242 is the HPr domain; sequence ARSLAVVIKN…QLAEDNFGET (88 aa). The active-site Pros-phosphohistidine intermediate is the His-169. The interval 264–472 is PTS EI-like, N-terminal part; sequence QPVLCTVQAK…VKTQRFNRQG (209 aa). Residue His-430 is the Tele-phosphohistidine intermediate of the active site.

This sequence belongs to the PEP-utilizing enzyme family. In terms of assembly, homodimer. The dihydroxyacetone kinase complex is composed of a homodimer of DhaM, a homodimer of DhaK and the subunit DhaL.

The enzyme catalyses dihydroxyacetone + phosphoenolpyruvate = dihydroxyacetone phosphate + pyruvate. Its pathway is polyol metabolism; glycerol degradation. In terms of biological role, component of the dihydroxyacetone kinase complex, which is responsible for the phosphoenolpyruvate (PEP)-dependent phosphorylation of dihydroxyacetone. DhaM serves as the phosphoryl donor. Is phosphorylated by phosphoenolpyruvate in an EI- and HPr-dependent reaction, and a phosphorelay system on histidine residues finally leads to phosphoryl transfer to DhaL and dihydroxyacetone. This chain is PEP-dependent dihydroxyacetone kinase, phosphoryl donor subunit DhaM, found in Escherichia coli (strain K12).